The following is a 76-amino-acid chain: uncharacterized protein (76 aa).

It localises to the host cytoplasm. This is an uncharacterized protein from Escherichia phage Mu (Bacteriophage Mu).